The following is a 329-amino-acid chain: VSG expression site-associated protein 221A (329 aa).

The first 23 residues, 1–23 (MKVEIVELVVLLFSVTCVDAWLQ), serve as a signal peptide directing secretion. 3 N-linked (GlcNAc...) asparagine glycosylation sites follow: asparagine 73, asparagine 294, and asparagine 308.

Functionally, not known but may be related to activation of the variant surface glycoprotein genes. In Trypanosoma brucei brucei, this protein is VSG expression site-associated protein 221A.